The primary structure comprises 543 residues: ABC transport system permease protein p69 (543 aa).

12 helical membrane passes run 18 to 38 (IWYW…YSWI), 78 to 98 (AFFV…FSYW), 115 to 135 (ITIV…SNLF), 141 to 161 (ATLT…TTFF), 211 to 231 (TLLS…PLSI), 237 to 257 (LVLI…VVVF), 288 to 308 (IIFI…LVTI), 354 to 374 (ISLI…SCNL), 379 to 399 (FSIS…ILLF), 413 to 433 (IILV…SINF), 482 to 502 (LILF…NFFE), and 510 to 530 (GSVT…FLSV). Residues 74–256 (LAQTAFFVTG…TFLIFIEVVV (183 aa)) enclose the ABC transmembrane type-1 domain.

Belongs to the binding-protein-dependent transport system permease family.

The protein resides in the cell membrane. Its function is as follows. Probably part of a high-affinity transport system. This chain is ABC transport system permease protein p69 (p69), found in Mycoplasma genitalium (strain ATCC 33530 / DSM 19775 / NCTC 10195 / G37) (Mycoplasmoides genitalium).